The following is a 620-amino-acid chain: Chaperone protein HtpG (620 aa).

An a; substrate-binding region spans residues 1–334; the sequence is MTTTDTAPQT…SEDLPLNLSR (334 aa). The interval 335–548 is b; that stretch reads EMLQNNPQLV…GQGPDRALER (214 aa). The interval 549 to 620 is c; the sequence is MLAQQNRGGA…RINRLVLRAL (72 aa).

Belongs to the heat shock protein 90 family. Homodimer.

The protein resides in the cytoplasm. In terms of biological role, molecular chaperone. Has ATPase activity. The chain is Chaperone protein HtpG from Rhodopseudomonas palustris (strain BisA53).